A 732-amino-acid polypeptide reads, in one-letter code: MSMAEMRCPFSGHGAATTPASATTNQHWWPEQINLGLLHQHNPAANPLGSNFDYRQAFNSLDLNAVKADLMALMTDSQSWWPADWGHYGGLFIRMAWHSAGTYRLADGRGGAGHGNQRFAPLNSWPDNTNLDKARRLLWPIKAKYGSNLSWADLIILAGNCALESMGLPTAGFAGGREDIWEPEDDIYWGSETSWLSDERHDNDGAIESPLAATEMGLIYVNPEGPHGEPDPVASGREVRDTFARMGMNNEETVALVAGGHTFGKAHGAAPSAHLGADPEGAALEQLGLGWQNTYASGCGADTITSGIEGAWKPNPTRWDQGYFEMLFGYEWELHQSPAGAWQWHPKDVKAEHMIPDAHVPGRSAPPMMTTADLSLRFDPVYEPIARRFLGDPQAFGNAFAQAWFKLTHRDLGPRSCYLGADVPEAVMSWQDPLPTTSHPTIDAPAVDALKQELLNTGLSHGELISTAWASAASFRQSDRRGGANGARLRLQPQCNWELNNPEQLKRVLSVLEAVQMRFNQQHQGGMQVSLADLIVLSGSAAVEQAMAATGQRCRVRFTPGRVDASAEQTDNASFNALKPIADGFRNYLRSDLPLKAEQLLVDRAQQLHLSAPEMTALIGGFRVLGLNWDGSDIGVFTSRPGQFSNDFFVNLLDMSTQWSPVEGHSNLYQGIDTETKQPRWRASRVDLVFGSHAQLRAIAEVYGQAGGSARLAADFSAAWSKVMELDRFDLL.

The tract at residues 1–21 (MSMAEMRCPFSGHGAATTPAS) is disordered. The signal sequence occupies residues 1–22 (MSMAEMRCPFSGHGAATTPASA). Positions 97-220 (WHSAGTYRLA…LAATEMGLIY (124 aa)) form a cross-link, tryptophyl-tyrosyl-methioninium (Trp-Tyr) (with M-246). H98 acts as the Proton acceptor in catalysis. Residues 220-246 (YVNPEGPHGEPDPVASGREVRDTFARM) constitute a cross-link (tryptophyl-tyrosyl-methioninium (Tyr-Met) (with W-97)). Residue H261 participates in heme b binding.

The protein belongs to the peroxidase family. Peroxidase/catalase subfamily. As to quaternary structure, homodimer or homotetramer. Requires heme b as cofactor. Post-translationally, formation of the three residue Trp-Tyr-Met cross-link is important for the catalase, but not the peroxidase activity of the enzyme.

It catalyses the reaction H2O2 + AH2 = A + 2 H2O. The enzyme catalyses 2 H2O2 = O2 + 2 H2O. Bifunctional enzyme with both catalase and broad-spectrum peroxidase activity. This is Catalase-peroxidase from Synechococcus sp. (strain RCC307).